We begin with the raw amino-acid sequence, 201 residues long: Peroxiredoxin-2F, mitochondrial (201 aa).

A mitochondrion-targeting transit peptide spans methionine 1–phenylalanine 30. Threonine 37 bears the Phosphothreonine mark. The region spanning threonine 37–isoleucine 201 is the Thioredoxin domain. Cysteine 89 acts as the Cysteine sulfenic acid (-SOH) intermediate in catalysis. The residue at position 149 (serine 149) is a Phosphoserine.

The protein belongs to the peroxiredoxin family. Prx5 subfamily. As to quaternary structure, monomer. In terms of tissue distribution, expressed in the whole plant.

The protein localises to the mitochondrion matrix. It carries out the reaction [glutaredoxin]-dithiol + a hydroperoxide = [glutaredoxin]-disulfide + an alcohol + H2O. Its function is as follows. Thiol-specific peroxidase that catalyzes the reduction of hydrogen peroxide and organic hydroperoxides to water and alcohols, respectively. Plays a role in cell protection against oxidative stress by detoxifying peroxides. Reduces preferentially hydrogen peroxide rather than alkyl peroxides. May be involved in mitochondrial redox homeostasis. The polypeptide is Peroxiredoxin-2F, mitochondrial (PRXIIF) (Arabidopsis thaliana (Mouse-ear cress)).